We begin with the raw amino-acid sequence, 416 residues long: Phosphoglycerate kinase (416 aa).

The (2R)-3-phosphoglycerate site is built by valine 23, aspartate 24, phenylalanine 25, asparagine 26, glutamine 38, arginine 39, serine 62, histidine 63, glycine 65, arginine 66, leucine 121, arginine 122, histidine 168, and arginine 169. An ADP-binding site is contributed by glycine 212. Glycine 212 provides a ligand contact to CDP. The AMP site is built by alanine 213 and lysine 214. Alanine 213 serves as a coordination point for ATP. Mg(2+) is bound at residue alanine 213. Alanine 216 and aspartate 217 together coordinate Mg(2+). Aspartate 217 is a CDP binding site. Lysine 218 serves as a coordination point for AMP. Lysine 218 is a binding site for ATP. Glycine 236 lines the ADP pocket. A CDP-binding site is contributed by glycine 236. AMP-binding residues include glycine 237 and glycine 311. ATP contacts are provided by glycine 237 and glycine 311. CDP is bound by residues glycine 336 and phenylalanine 341. ADP is bound at residue phenylalanine 341. Glutamate 342 is an AMP binding site. Residues glutamate 342, aspartate 373, and threonine 374 each contribute to the ATP site. Aspartate 373 provides a ligand contact to Mg(2+).

This sequence belongs to the phosphoglycerate kinase family. Monomer. Mg(2+) is required as a cofactor.

It localises to the cytoplasm. It is found in the mitochondrion. It catalyses the reaction (2R)-3-phosphoglycerate + ATP = (2R)-3-phospho-glyceroyl phosphate + ADP. It participates in carbohydrate degradation; glycolysis; pyruvate from D-glyceraldehyde 3-phosphate: step 2/5. In terms of biological role, catalyzes one of the two ATP producing reactions in the glycolytic pathway via the reversible conversion of 1,3-diphosphoglycerate to 3-phosphoglycerate. Both L- and D- forms of purine and pyrimidine nucleotides can be used as substrates, but the activity is much lower on pyrimidines. Negatively regulates the biosynthesis of acetyl-CoA from pyruvate in the mitochondrion. This is Phosphoglycerate kinase (PGK1) from Candida glabrata (strain ATCC 2001 / BCRC 20586 / JCM 3761 / NBRC 0622 / NRRL Y-65 / CBS 138) (Yeast).